Reading from the N-terminus, the 271-residue chain is MLKIGVFGCGAIGTELCKAIDSGHIEVELYAVYDRHEQSIINLKEQLKNTDPKVLEIVEMVKHVDLVVECASQQAVYDVVPTTLHAKCDVMVISVGAFADKKLLDTTFDIAKEYGCKIYFPSGAIVGLDGLKSASAASIYSVTLTTQKHPRSFEGAPYIVQNNIDLDSIKGKTVLFEGMASEAVKAFPSNVNVAASLSIAGIGFDKTKVKIIANPALTRNIHEITVEGEFGMFTTRVENVPAPSNPKTSYLAALSAISTLKKIADPLQVGT.

Positions 124 and 192 each coordinate NAD(+). The active site involves histidine 222.

Belongs to the L-aspartate dehydrogenase family.

It catalyses the reaction L-aspartate + NADP(+) + H2O = oxaloacetate + NH4(+) + NADPH + H(+). The enzyme catalyses L-aspartate + NAD(+) + H2O = oxaloacetate + NH4(+) + NADH + H(+). It functions in the pathway cofactor biosynthesis; NAD(+) biosynthesis; iminoaspartate from L-aspartate (dehydrogenase route): step 1/1. In terms of biological role, specifically catalyzes the NAD or NADP-dependent dehydrogenation of L-aspartate to iminoaspartate. The sequence is that of L-aspartate dehydrogenase from Methanococcoides burtonii (strain DSM 6242 / NBRC 107633 / OCM 468 / ACE-M).